The sequence spans 592 residues: Aspartate--tRNA(Asp/Asn) ligase (592 aa).

Glu172 provides a ligand contact to L-aspartate. Residues 196–199 form an aspartate region; the sequence is QLFK. Arg218 serves as a coordination point for L-aspartate. ATP is bound by residues 218–220 and Gln227; that span reads RDE. L-aspartate is bound at residue His450. Residue Glu484 coordinates ATP. Arg491 is a binding site for L-aspartate. 536–539 contacts ATP; that stretch reads GLDR.

It belongs to the class-II aminoacyl-tRNA synthetase family. Type 1 subfamily. Homodimer.

Its subcellular location is the cytoplasm. The catalysed reaction is tRNA(Asx) + L-aspartate + ATP = L-aspartyl-tRNA(Asx) + AMP + diphosphate. Aspartyl-tRNA synthetase with relaxed tRNA specificity since it is able to aspartylate not only its cognate tRNA(Asp) but also tRNA(Asn). Reaction proceeds in two steps: L-aspartate is first activated by ATP to form Asp-AMP and then transferred to the acceptor end of tRNA(Asp/Asn). This is Aspartate--tRNA(Asp/Asn) ligase from Thioalkalivibrio sulfidiphilus (strain HL-EbGR7).